Consider the following 259-residue polypeptide: Type III pantothenate kinase (259 aa).

6–13 lines the ATP pocket; that stretch reads DVGNTNIV. Substrate is bound by residues Tyr100 and 107-110; that span reads GADR. Asp109 serves as the catalytic Proton acceptor. Asp129 provides a ligand contact to K(+). Thr132 contacts ATP. Thr184 is a substrate binding site.

It belongs to the type III pantothenate kinase family. In terms of assembly, homodimer. NH4(+) serves as cofactor. The cofactor is K(+).

It is found in the cytoplasm. It catalyses the reaction (R)-pantothenate + ATP = (R)-4'-phosphopantothenate + ADP + H(+). Its pathway is cofactor biosynthesis; coenzyme A biosynthesis; CoA from (R)-pantothenate: step 1/5. Catalyzes the phosphorylation of pantothenate (Pan), the first step in CoA biosynthesis. In Clostridium kluyveri (strain NBRC 12016), this protein is Type III pantothenate kinase.